Consider the following 323-residue polypeptide: Acetyl-coenzyme A carboxylase carboxyl transferase subunit alpha (323 aa).

Residues 35-296 (EVLSELDELR…GMTLKKCLDE (262 aa)) enclose the CoA carboxyltransferase C-terminal domain.

It belongs to the AccA family. Acetyl-CoA carboxylase is a heterohexamer composed of biotin carboxyl carrier protein (AccB), biotin carboxylase (AccC) and two subunits each of ACCase subunit alpha (AccA) and ACCase subunit beta (AccD).

It is found in the cytoplasm. It carries out the reaction N(6)-carboxybiotinyl-L-lysyl-[protein] + acetyl-CoA = N(6)-biotinyl-L-lysyl-[protein] + malonyl-CoA. Its pathway is lipid metabolism; malonyl-CoA biosynthesis; malonyl-CoA from acetyl-CoA: step 1/1. Its function is as follows. Component of the acetyl coenzyme A carboxylase (ACC) complex. First, biotin carboxylase catalyzes the carboxylation of biotin on its carrier protein (BCCP) and then the CO(2) group is transferred by the carboxyltransferase to acetyl-CoA to form malonyl-CoA. This Aquifex aeolicus (strain VF5) protein is Acetyl-coenzyme A carboxylase carboxyl transferase subunit alpha.